Consider the following 280-residue polypeptide: Bifunctional protein FolD (280 aa).

Residues 166-168 (GRS) and serine 191 each bind NADP(+).

Belongs to the tetrahydrofolate dehydrogenase/cyclohydrolase family. Homodimer.

It catalyses the reaction (6R)-5,10-methylene-5,6,7,8-tetrahydrofolate + NADP(+) = (6R)-5,10-methenyltetrahydrofolate + NADPH. It carries out the reaction (6R)-5,10-methenyltetrahydrofolate + H2O = (6R)-10-formyltetrahydrofolate + H(+). It participates in one-carbon metabolism; tetrahydrofolate interconversion. Functionally, catalyzes the oxidation of 5,10-methylenetetrahydrofolate to 5,10-methenyltetrahydrofolate and then the hydrolysis of 5,10-methenyltetrahydrofolate to 10-formyltetrahydrofolate. This Saccharophagus degradans (strain 2-40 / ATCC 43961 / DSM 17024) protein is Bifunctional protein FolD.